The following is a 297-amino-acid chain: Bifunctional protein FolD (297 aa).

NADP(+) contacts are provided by residues 168–170 (GRS), T197, and V238.

This sequence belongs to the tetrahydrofolate dehydrogenase/cyclohydrolase family. In terms of assembly, homodimer.

The enzyme catalyses (6R)-5,10-methylene-5,6,7,8-tetrahydrofolate + NADP(+) = (6R)-5,10-methenyltetrahydrofolate + NADPH. The catalysed reaction is (6R)-5,10-methenyltetrahydrofolate + H2O = (6R)-10-formyltetrahydrofolate + H(+). It functions in the pathway one-carbon metabolism; tetrahydrofolate interconversion. Its function is as follows. Catalyzes the oxidation of 5,10-methylenetetrahydrofolate to 5,10-methenyltetrahydrofolate and then the hydrolysis of 5,10-methenyltetrahydrofolate to 10-formyltetrahydrofolate. This chain is Bifunctional protein FolD, found in Lawsonia intracellularis (strain PHE/MN1-00).